We begin with the raw amino-acid sequence, 87 residues long: Putative regulatory protein BCG9842_B1272 (87 aa).

This sequence belongs to the RemA family.

The chain is Putative regulatory protein BCG9842_B1272 from Bacillus cereus (strain G9842).